The following is a 239-amino-acid chain: Phosphoribosylaminoimidazole-succinocarboxamide synthase (239 aa).

Belongs to the SAICAR synthetase family.

It catalyses the reaction 5-amino-1-(5-phospho-D-ribosyl)imidazole-4-carboxylate + L-aspartate + ATP = (2S)-2-[5-amino-1-(5-phospho-beta-D-ribosyl)imidazole-4-carboxamido]succinate + ADP + phosphate + 2 H(+). The protein operates within purine metabolism; IMP biosynthesis via de novo pathway; 5-amino-1-(5-phospho-D-ribosyl)imidazole-4-carboxamide from 5-amino-1-(5-phospho-D-ribosyl)imidazole-4-carboxylate: step 1/2. The chain is Phosphoribosylaminoimidazole-succinocarboxamide synthase from Shouchella clausii (strain KSM-K16) (Alkalihalobacillus clausii).